The following is a 164-amino-acid chain: Peptidyl-prolyl cis-trans isomerase A (164 aa).

Residue methionine 1 is modified to N-acetylmethionine. Position 2 is an N-acetylvaline; in Peptidyl-prolyl cis-trans isomerase A, N-terminally processed (valine 2). The PPIase cyclophilin-type domain occupies 7–163 (FFDIAVDGEP…KKITIADCGQ (157 aa)). Lysine 28 is subject to N6-acetyllysine; alternate. Lysine 28 participates in a covalent cross-link: Glycyl lysine isopeptide (Lys-Gly) (interchain with G-Cter in SUMO2); alternate. Lysine 28 is covalently cross-linked (Glycyl lysine isopeptide (Lys-Gly) (interchain with G-Cter in ubiquitin); alternate). Lysine 44 and lysine 76 each carry N6-acetyllysine. Residue serine 77 is modified to Phosphoserine. Lysine 82 is subject to N6-acetyllysine; alternate. Lysine 82 is covalently cross-linked (Glycyl lysine isopeptide (Lys-Gly) (interchain with G-Cter in SUMO2); alternate). Threonine 93 is subject to Phosphothreonine. The N-linked (GlcNAc...) asparagine glycan is linked to asparagine 108. N6-acetyllysine occurs at positions 125, 131, and 133.

The protein belongs to the cyclophilin-type PPIase family. PPIase A subfamily. As to quaternary structure, interacts with protein phosphatase PPP3CA/calcineurin A. Interacts with isoform 2 of BSG/CD147. Interacts with FOXO1; the interaction promotes FOXO1 dephosphorylation, nuclear accumulation and transcriptional activity. Interacts with integrin ITGA2B:ITGB3; the interaction is ROS and peptidyl-prolyl cis-trans isomerase (PPIase) activity-dependent and is increased in the presence of thrombin. Interacts with MAP3K5. Interacts with TARDBP; the interaction is dependent on the RNA-binding activity of TARDBP and the PPIase activity of PPIA/CYPA and the acetylation of PPIA/CYPA at Lys-125 favors the interaction. Interacts with HNRNPA1, HNRNPA2B1, HNRNPC, RBMX, HNRNPK and HNRNPM. In terms of processing, acetylation at Lys-125 markedly inhibits catalysis of cis to trans isomerization. PPIA acetylation also antagonizes the immunosuppressive effects of cyclosporine by inhibiting the sequential steps of cyclosporine binding and calcineurin inhibition. Acetylation at Lys-125 favors the interaction with TARDBP.

Its subcellular location is the cytoplasm. It localises to the secreted. The protein localises to the nucleus. It carries out the reaction [protein]-peptidylproline (omega=180) = [protein]-peptidylproline (omega=0). Binds cyclosporin A (CsA). CsA mediates some of its effects via an inhibitory action on PPIase. In terms of biological role, catalyzes the cis-trans isomerization of proline imidic peptide bonds in oligopeptides. Exerts a strong chemotactic effect on leukocytes partly through activation of one of its membrane receptors BSG/CD147, initiating a signaling cascade that culminates in MAPK/ERK activation. Activates endothelial cells (ECs) in a proinflammatory manner by stimulating activation of NF-kappa-B and ERK, JNK and p38 MAP-kinases and by inducing expression of adhesion molecules including SELE and VCAM1. Induces apoptosis in ECs by promoting the FOXO1-dependent expression of CCL2 and BCL2L11 which are involved in EC chemotaxis and apoptosis. In response to oxidative stress, initiates proapoptotic and antiapoptotic signaling in ECs via activation of NF-kappa-B and AKT1 and up-regulation of antiapoptotic protein BCL2. Negatively regulates MAP3K5/ASK1 kinase activity, autophosphorylation and oxidative stress-induced apoptosis mediated by MAP3K5/ASK1. Necessary for the assembly of TARDBP in heterogeneous nuclear ribonucleoprotein (hnRNP) complexes and regulates TARDBP binding to RNA UG repeats and TARDBP-dependent expression of HDAC6, ATG7 and VCP which are involved in clearance of protein aggregates. Plays an important role in platelet activation and aggregation. Regulates calcium mobilization and integrin ITGA2B:ITGB3 bidirectional signaling via increased ROS production as well as by facilitating the interaction between integrin and the cell cytoskeleton. Binds heparan sulfate glycosaminoglycans. The protein is Peptidyl-prolyl cis-trans isomerase A (PPIA) of Saguinus oedipus (Cotton-top tamarin).